The primary structure comprises 335 residues: UPF0324 membrane protein LMOf2365_2179 (335 aa).

8 consecutive transmembrane segments (helical) span residues 10 to 28 (TFWY…SYFL), 33 to 55 (FLMI…ALFP), 91 to 113 (AGWR…VYFL), 123 to 142 (LAIL…VVAI), 155 to 177 (VAAT…IYPI), 251 to 270 (VPWF…FGII), 277 to 299 (FLVI…NVHL), and 309 to 331 (PFAA…VLLF).

Belongs to the UPF0324 family.

It localises to the cell membrane. This Listeria monocytogenes serotype 4b (strain F2365) protein is UPF0324 membrane protein LMOf2365_2179.